Consider the following 131-residue polypeptide: Ribosome-binding factor A (131 aa).

Positions 110 to 131 are disordered; sequence QMNLGEDNEDNEDKENNDPGEE. Residues 115–131 show a composition bias toward acidic residues; it reads EDNEDNEDKENNDPGEE.

It belongs to the RbfA family. In terms of assembly, monomer. Binds 30S ribosomal subunits, but not 50S ribosomal subunits or 70S ribosomes.

The protein resides in the cytoplasm. One of several proteins that assist in the late maturation steps of the functional core of the 30S ribosomal subunit. Associates with free 30S ribosomal subunits (but not with 30S subunits that are part of 70S ribosomes or polysomes). Required for efficient processing of 16S rRNA. May interact with the 5'-terminal helix region of 16S rRNA. This Natranaerobius thermophilus (strain ATCC BAA-1301 / DSM 18059 / JW/NM-WN-LF) protein is Ribosome-binding factor A.